A 795-amino-acid polypeptide reads, in one-letter code: MDADKSEGCCSVQLIDGDGIYNVSRIDHFIKDVKLADCGLSYAVVSIMGPQSSGKSTLLNHLFGTNFMEMDAFKGRSQTTKGIWLARCAGIEPCTLVMDLEGTDGRERGEDDTAFEKQSALFALAISDIVLINMWCHDIGREQAANKPLLKTVFQVMMRLFSPRKTTMLFVIRDKTRTPLENLEPVLREDIQKIWDSVPKPEAHKETPLSDFFNVEVVALSSYEEKEEQFKEQIASLRQRFMHSIAPGGLAGDRRGVIPASGFAFSADQIWRVIKENKDLDLPAHKVMVATVRCEEIANEKFAHFITNEDWRKLDEEVQAGPVSNFGKRLTTILGSCLSEYDGEATFFDEGVRSSKRQQLEEKLLQLVNPAFQDVLGHIRWGILEKFKASFDKALGIGEGFSSASQDWFKACMTQFDEECAGAIIEQANWDTSKVRDKLVRDIEAHISSVRTSKLSELTSLYESKVHEALSEPVEALLDGANDETWSTVKKLHRRETESAVSGLSSALAGFDMEEETRDRMVKSLQDYARGVIETKAKEEAVRVLMRMKERFGTIFSHDSDSMPRVWTGKEDLRAITKSARSASLKLLSVMAVIRLGDEPDNIEKTLTVALLDPTKNDTSKKSITTSDPLASSTWDEVPSSRTLITPVQCKSIWRQFKTETEYTVTQAISAQEANRRGNNWLPPPWAILALIVLGFNEFMTLLRNPLYLGVMFVAFLLAKALWTQLDIPGEFRNGALPGLISISAKFVPTVMNLIKNLAAQGEDPPAANPENRRSSNNTSSSENPPDHKSSSKED.

Residues 1 to 682 (MDADKSEGCC…EANRRGNNWL (682 aa)) are Cytoplasmic-facing. The region spanning 39-254 (GLSYAVVSIM…IAPGGLAGDR (216 aa)) is the GB1/RHD3-type G domain. Residue 49–56 (GPQSSGKS) participates in GTP binding. Residues 218-244 (VALSSYEEKEEQFKEQIASLRQRFMHS) are a coiled coil. A helical transmembrane segment spans residues 683–703 (PPPWAILALIVLGFNEFMTLL). At 704–706 (RNP) the chain is on the lumenal side. The chain crosses the membrane as a helical span at residues 707–727 (LYLGVMFVAFLLAKALWTQLD). Residues 728 to 795 (IPGEFRNGAL…PDHKSSSKED (68 aa)) lie on the Cytoplasmic side of the membrane. The interval 761–795 (QGEDPPAANPENRRSSNNTSSSENPPDHKSSSKED) is disordered. Over residues 775-784 (SSNNTSSSEN) the composition is skewed to low complexity. A compositionally biased stretch (basic and acidic residues) spans 785–795 (PPDHKSSSKED).

The protein belongs to the TRAFAC class dynamin-like GTPase superfamily. GB1/RHD3 GTPase family. RHD3 subfamily. In terms of tissue distribution, specifically expressed in flowers.

The protein resides in the endoplasmic reticulum membrane. In terms of biological role, probable GTP-binding protein that may be involved in cell development. This Arabidopsis thaliana (Mouse-ear cress) protein is Protein ROOT HAIR DEFECTIVE 3 homolog 1.